We begin with the raw amino-acid sequence, 376 residues long: Queuine tRNA-ribosyltransferase (376 aa).

The active-site Proton acceptor is Asp-89. Substrate-binding positions include 89–93, Asp-143, Gln-194, and Gly-221; that span reads DSGGF. The interval 252 to 258 is RNA binding; sequence GVGIPSN. Asp-271 acts as the Nucleophile in catalysis. Positions 276–280 are RNA binding; important for wobble base 34 recognition; sequence ARNGR. Cys-309, Cys-311, Cys-314, and His-340 together coordinate Zn(2+).

The protein belongs to the queuine tRNA-ribosyltransferase family. As to quaternary structure, homodimer. Within each dimer, one monomer is responsible for RNA recognition and catalysis, while the other monomer binds to the replacement base PreQ1. Requires Zn(2+) as cofactor.

The catalysed reaction is 7-aminomethyl-7-carbaguanine + guanosine(34) in tRNA = 7-aminomethyl-7-carbaguanosine(34) in tRNA + guanine. It functions in the pathway tRNA modification; tRNA-queuosine biosynthesis. In terms of biological role, catalyzes the base-exchange of a guanine (G) residue with the queuine precursor 7-aminomethyl-7-deazaguanine (PreQ1) at position 34 (anticodon wobble position) in tRNAs with GU(N) anticodons (tRNA-Asp, -Asn, -His and -Tyr). Catalysis occurs through a double-displacement mechanism. The nucleophile active site attacks the C1' of nucleotide 34 to detach the guanine base from the RNA, forming a covalent enzyme-RNA intermediate. The proton acceptor active site deprotonates the incoming PreQ1, allowing a nucleophilic attack on the C1' of the ribose to form the product. After dissociation, two additional enzymatic reactions on the tRNA convert PreQ1 to queuine (Q), resulting in the hypermodified nucleoside queuosine (7-(((4,5-cis-dihydroxy-2-cyclopenten-1-yl)amino)methyl)-7-deazaguanosine). The polypeptide is Queuine tRNA-ribosyltransferase (Clostridium botulinum (strain Okra / Type B1)).